The following is a 335-amino-acid chain: Twinfilin (335 aa).

2 consecutive ADF-H domains span residues 4–140 and 176–316; these read SSGI…QHKL and GISF…NELH. Positions 307–335 are disordered; it reads SEESIINELHPPKVEEKKAFSKPSRPGRK. Positions 316–325 are enriched in basic and acidic residues; that stretch reads HPPKVEEKKA.

This sequence belongs to the actin-binding proteins ADF family. Twinfilin subfamily. In terms of assembly, interacts with G-actin; ADP-actin form.

Its subcellular location is the cytoplasm. It is found in the cytoskeleton. The protein resides in the cell cortex. Actin-binding protein involved in motile and morphological processes. Inhibits actin polymerization, likely by sequestering G-actin. The polypeptide is Twinfilin (twfA) (Dictyostelium discoideum (Social amoeba)).